The chain runs to 37 residues: Large ribosomal subunit protein bL36 (37 aa).

The protein belongs to the bacterial ribosomal protein bL36 family.

In Bacillus anthracis (strain A0248), this protein is Large ribosomal subunit protein bL36.